The following is a 423-amino-acid chain: Protein disulfide isomerase-like 5-2 (423 aa).

Positions 1-35 (MAATTTRPLPLLLLLLLPPLLLLLLSFHAAAAAAA) are cleaved as a signal peptide. The Thioredoxin domain occupies 36 to 149 (EEFPRDGRVI…LVRNLNKFVA (114 aa)). Catalysis depends on nucleophile residues Cys71 and Cys74. A disulfide bridge connects residues Cys71 and Cys74. Asn181 carries N-linked (GlcNAc...) asparagine glycosylation. The chain crosses the membrane as a helical span at residues 386 to 406 (LVSLNSLYILICVFALLGVMI).

The protein belongs to the protein disulfide isomerase family.

It localises to the membrane. Acts as a protein-folding catalyst that interacts with nascent polypeptides to catalyze the formation, isomerization, and reduction or oxidation of disulfide bonds. May play a role in storage protein biogenesis. This chain is Protein disulfide isomerase-like 5-2 (PDIL5-2), found in Oryza sativa subsp. japonica (Rice).